Consider the following 473-residue polypeptide: Photosystem II CP43 reaction center protein (473 aa).

Residues 1–14 constitute a propeptide that is removed on maturation; the sequence is MKILYSPRRFYPVE. An N-acetylthreonine modification is found at threonine 15. Threonine 15 carries the phosphothreonine modification. The next 5 membrane-spanning stretches (helical) occupy residues 69-93, 134-155, 178-200, 255-275, and 291-312; these read LFEV…PHLA, LIGP…KDKN, KALY…REIT, KPFA…LSYS, and WFNN…ASQA. Glutamate 367 lines the [CaMn4O5] cluster pocket. The chain crosses the membrane as a helical span at residues 447–471; sequence RARAAAAGFEKGIDRDTEPVLSMTP.

The protein belongs to the PsbB/PsbC family. PsbC subfamily. PSII is composed of 1 copy each of membrane proteins PsbA, PsbB, PsbC, PsbD, PsbE, PsbF, PsbH, PsbI, PsbJ, PsbK, PsbL, PsbM, PsbT, PsbX, PsbY, PsbZ, Psb30/Ycf12, at least 3 peripheral proteins of the oxygen-evolving complex and a large number of cofactors. It forms dimeric complexes. The cofactor is Binds multiple chlorophylls and provides some of the ligands for the Ca-4Mn-5O cluster of the oxygen-evolving complex. It may also provide a ligand for a Cl- that is required for oxygen evolution. PSII binds additional chlorophylls, carotenoids and specific lipids..

It is found in the plastid. Its subcellular location is the chloroplast thylakoid membrane. In terms of biological role, one of the components of the core complex of photosystem II (PSII). It binds chlorophyll and helps catalyze the primary light-induced photochemical processes of PSII. PSII is a light-driven water:plastoquinone oxidoreductase, using light energy to abstract electrons from H(2)O, generating O(2) and a proton gradient subsequently used for ATP formation. The protein is Photosystem II CP43 reaction center protein of Adiantum capillus-veneris (Maidenhair fern).